A 498-amino-acid polypeptide reads, in one-letter code: Probable cytosol aminopeptidase (498 aa).

The Mn(2+) site is built by Lys-263 and Asp-268. The active site involves Lys-275. The Mn(2+) site is built by Asp-286, Asp-345, and Glu-347. The active site involves Arg-349.

Belongs to the peptidase M17 family. Requires Mn(2+) as cofactor.

It localises to the cytoplasm. The enzyme catalyses Release of an N-terminal amino acid, Xaa-|-Yaa-, in which Xaa is preferably Leu, but may be other amino acids including Pro although not Arg or Lys, and Yaa may be Pro. Amino acid amides and methyl esters are also readily hydrolyzed, but rates on arylamides are exceedingly low.. It carries out the reaction Release of an N-terminal amino acid, preferentially leucine, but not glutamic or aspartic acids.. Functionally, presumably involved in the processing and regular turnover of intracellular proteins. Catalyzes the removal of unsubstituted N-terminal amino acids from various peptides. The protein is Probable cytosol aminopeptidase of Rhodopseudomonas palustris (strain BisA53).